An 83-amino-acid chain; its full sequence is MLGMYLTTAFNFLTAPTPKTMTEGMTGIWTGLTSALWKVKEGITNIFPEIMVFLGEAWIILIPFAIFCIIKILNFFRVMVKGF.

Residues 50 to 70 traverse the membrane as a helical segment; sequence IMVFLGEAWIILIPFAIFCII.

This sequence belongs to the plectrovirus ORF7 family.

It localises to the host membrane. This is an uncharacterized protein from Spiroplasma melliferum (SpV1).